The chain runs to 407 residues: Na(+)-translocating NADH-quinone reductase subunit F (407 aa).

A helical transmembrane segment spans residues 3–23 (IILGVVMFTLIVLALVLVILF). Residues 32–126 (GDITISVNGD…DMDIELPEEI (95 aa)) enclose the 2Fe-2S ferredoxin-type domain. Positions 69, 75, 78, and 110 each coordinate [2Fe-2S] cluster. The 141-residue stretch at 129-269 (VKKWECTVIS…SGPFGEFFAK (141 aa)) folds into the FAD-binding FR-type domain. Positions 272 to 389 (DAEMVFIGGG…PMMNAAVIGM (118 aa)) are catalytic.

Belongs to the NqrF family. Composed of six subunits; NqrA, NqrB, NqrC, NqrD, NqrE and NqrF. [2Fe-2S] cluster serves as cofactor. The cofactor is FAD.

The protein resides in the cell inner membrane. The catalysed reaction is a ubiquinone + n Na(+)(in) + NADH + H(+) = a ubiquinol + n Na(+)(out) + NAD(+). Its function is as follows. NQR complex catalyzes the reduction of ubiquinone-1 to ubiquinol by two successive reactions, coupled with the transport of Na(+) ions from the cytoplasm to the periplasm. The first step is catalyzed by NqrF, which accepts electrons from NADH and reduces ubiquinone-1 to ubisemiquinone by a one-electron transfer pathway. This is Na(+)-translocating NADH-quinone reductase subunit F from Vibrio parahaemolyticus serotype O3:K6 (strain RIMD 2210633).